The following is a 358-amino-acid chain: Stearoyl-CoA desaturase 2 (358 aa).

Over 1–71 the chain is Cytoplasmic; sequence MPAHILQEIS…EGPPPKLEYV (71 aa). The tract at residues 16 to 39 is disordered; it reads TTTITAPPSGGQQNGGEKFEKSSH. A helical membrane pass occupies residues 72–92; it reads WRNIILMALLHLGALYGITLV. A substrate-binding site is contributed by asparagine 74. The Lumenal segment spans residues 93 to 96; it reads PSCK. A helical membrane pass occupies residues 97-117; that stretch reads LYTCLFAYLYYVISALGITAG. Residues 118–216 are Cytoplasmic-facing; sequence AHRLWSHRTY…EKLVMFQRRY (99 aa). Fe cation contacts are provided by histidine 119 and histidine 124. The Histidine box-1 signature appears at 119–124; that stretch reads HRLWSH. Substrate is bound by residues asparagine 147, arginine 154, and aspartate 155. Positions 156, 159, and 160 each coordinate Fe cation. Positions 156-160 match the Histidine box-2 motif; the sequence is HRAHH. 2 residues coordinate substrate: arginine 187 and lysine 188. Residues 217–236 traverse the membrane as a helical segment; sequence YKPGLLLMCFVLPTLVPWYC. Residues 237–240 are Lumenal-facing; it reads WGET. A helical membrane pass occupies residues 241-262; the sequence is FVNSLCVSTFLRYAVVLNATWL. Tryptophan 261 is a substrate binding site. The Cytoplasmic portion of the chain corresponds to 263–358; it reads VNSAAHLYGY…RTGDGSCKSG (96 aa). 4 residues coordinate Fe cation: histidine 268, histidine 297, histidine 300, and histidine 301. A Histidine box-3 motif is present at residues 297–301; the sequence is HNYHH.

It belongs to the fatty acid desaturase type 1 family. Fe(2+) serves as cofactor. As to expression, detected in brain and skin. Highly expressed in brain, and detected at low levels in heart, stomach, lung and testis. Detected both in dermis and epidermis.

The protein localises to the endoplasmic reticulum membrane. It is found in the microsome membrane. The catalysed reaction is octadecanoyl-CoA + 2 Fe(II)-[cytochrome b5] + O2 + 2 H(+) = (9Z)-octadecenoyl-CoA + 2 Fe(III)-[cytochrome b5] + 2 H2O. It carries out the reaction hexadecanoyl-CoA + 2 Fe(II)-[cytochrome b5] + O2 + 2 H(+) = (9Z)-hexadecenoyl-CoA + 2 Fe(III)-[cytochrome b5] + 2 H2O. In terms of biological role, stearoyl-CoA desaturase that utilizes O(2) and electrons from reduced cytochrome b5 to introduce the first double bond into saturated fatty acyl-CoA substrates. Catalyzes the insertion of a cis double bond at the delta-9 position into fatty acyl-CoA substrates including palmitoyl-CoA and stearoyl-CoA. Gives rise to a mixture of 16:1 and 18:1 unsaturated fatty acids. Contributes to the biosynthesis of membrane phospholipids, cholesterol esters and triglycerides, especially during embryonic development and in neonates. Important for normal permeability barrier function of the skin in neonates. The sequence is that of Stearoyl-CoA desaturase 2 (Scd2) from Mus musculus (Mouse).